A 191-amino-acid polypeptide reads, in one-letter code: uncharacterized protein (191 aa).

One can recognise an HTH tetR-type domain in the interval I3–M63. Residues T26–F45 constitute a DNA-binding region (H-T-H motif).

This is an uncharacterized protein from Bacillus subtilis (strain 168).